Reading from the N-terminus, the 353-residue chain is Methionine import ATP-binding protein MetN (353 aa).

Residues 8-249 (LDQIDVTFHQ…PKQPLTQDFI (242 aa)) form the ABC transporter domain. Position 42 to 49 (42 to 49 (GYSGAGKS)) interacts with ATP.

It belongs to the ABC transporter superfamily. Methionine importer (TC 3.A.1.24) family. The complex is composed of two ATP-binding proteins (MetN), two transmembrane proteins (MetI) and a solute-binding protein (MetQ).

Its subcellular location is the cell membrane. It carries out the reaction L-methionine(out) + ATP + H2O = L-methionine(in) + ADP + phosphate + H(+). The enzyme catalyses D-methionine(out) + ATP + H2O = D-methionine(in) + ADP + phosphate + H(+). Functionally, part of the ABC transporter complex MetNIQ involved in methionine import. Responsible for energy coupling to the transport system. The sequence is that of Methionine import ATP-binding protein MetN from Streptococcus pneumoniae serotype 4 (strain ATCC BAA-334 / TIGR4).